The sequence spans 344 residues: Eukaryotic translation initiation factor 2 subunit alpha homolog (344 aa).

The S1 motif domain maps to 21–92; it reads DMAVMIQVKN…EKGYIDLSKR (72 aa). Ser-56 is subject to Phosphoserine; by GCN2. The segment at 312–344 is disordered; that stretch reads DNEEMSGDEDSGDEEEDTGMGEVDLDAGAGIIE. Residues 314–336 show a composition bias toward acidic residues; sequence EEMSGDEDSGDEEEDTGMGEVDL.

Belongs to the eIF-2-alpha family. As to quaternary structure, heterotrimer composed of an alpha, a beta and a gamma chain. Phosphorylated at Ser-56 by GCN2.

In terms of biological role, functions in the early steps of protein synthesis by forming a ternary complex with GTP and initiator tRNA. This complex binds to a 40S ribosomal subunit, followed by mRNA binding to form a 43S pre-initiation complex. Junction of the 60S ribosomal subunit to form the 80S initiation complex is preceded by hydrolysis of the GTP bound to eIF-2 and release of an eIF-2-GDP binary complex. In order for eIF-2 to recycle and catalyze another round of initiation, the GDP bound to eIF-2 must exchange with GTP by way of a reaction catalyzed by eIF-2B. The sequence is that of Eukaryotic translation initiation factor 2 subunit alpha homolog from Arabidopsis thaliana (Mouse-ear cress).